We begin with the raw amino-acid sequence, 424 residues long: 5,5'-dehydrodivanillate O-demethylase oxygenase subunit (424 aa).

The Rieske domain maps to 27–135; the sequence is WHPIGGESEF…VRALGGLLWA (109 aa). Positions 68, 70, 87, and 90 each coordinate [2Fe-2S] cluster. The Fe cation site is built by His-181, His-186, and Asp-306.

It belongs to the bacterial ring-hydroxylating dioxygenase alpha subunit family. As to quaternary structure, homotrimer. The three-component monooxygenase is composed of an oxygenase (LigXa), a ferredoxin (LigXc) and a ferredoxin reductase (LigXd). [2Fe-2S] cluster is required as a cofactor. It depends on Fe cation as a cofactor.

It carries out the reaction 5,5'-dehydrodivanillate + NADH + O2 + H(+) = 2,2',3-trihydroxy-3'-methoxy-5,5'-dicarboxybiphenyl + formaldehyde + NAD(+) + H2O. Its function is as follows. Involved in the catabolism of 5,5'-dehydrodivanillate (DDVA), an intermediate in the biodegradation of lignin. Part of a three-component monooxygenase that catalyzes the O-demethylation of DDVA, leading to the formation of 2,2',3-trihydroxy-3'-methoxy-5,5'-dicarboxybiphenyl (OH-DDVA). The polypeptide is 5,5'-dehydrodivanillate O-demethylase oxygenase subunit (Sphingobium sp. (strain NBRC 103272 / SYK-6)).